A 644-amino-acid polypeptide reads, in one-letter code: 1-deoxy-D-xylulose-5-phosphate synthase (644 aa).

Residues His84 and 125-127 (GHS) each bind thiamine diphosphate. A Mg(2+)-binding site is contributed by Asp156. Thiamine diphosphate-binding positions include 157 to 158 (GA), Asn185, Tyr296, and Glu378. Asn185 contributes to the Mg(2+) binding site.

It belongs to the transketolase family. DXPS subfamily. In terms of assembly, homodimer. Mg(2+) is required as a cofactor. Requires thiamine diphosphate as cofactor.

It catalyses the reaction D-glyceraldehyde 3-phosphate + pyruvate + H(+) = 1-deoxy-D-xylulose 5-phosphate + CO2. Its pathway is metabolic intermediate biosynthesis; 1-deoxy-D-xylulose 5-phosphate biosynthesis; 1-deoxy-D-xylulose 5-phosphate from D-glyceraldehyde 3-phosphate and pyruvate: step 1/1. Catalyzes the acyloin condensation reaction between C atoms 2 and 3 of pyruvate and glyceraldehyde 3-phosphate to yield 1-deoxy-D-xylulose-5-phosphate (DXP). In Paramagnetospirillum magneticum (strain ATCC 700264 / AMB-1) (Magnetospirillum magneticum), this protein is 1-deoxy-D-xylulose-5-phosphate synthase.